Consider the following 316-residue polypeptide: 4-hydroxy-3-methylbut-2-enyl diphosphate reductase (316 aa).

[4Fe-4S] cluster is bound at residue cysteine 12. (2E)-4-hydroxy-3-methylbut-2-enyl diphosphate contacts are provided by histidine 41 and histidine 74. Dimethylallyl diphosphate is bound by residues histidine 41 and histidine 74. Positions 41 and 74 each coordinate isopentenyl diphosphate. Cysteine 96 is a [4Fe-4S] cluster binding site. A (2E)-4-hydroxy-3-methylbut-2-enyl diphosphate-binding site is contributed by histidine 124. Residue histidine 124 coordinates dimethylallyl diphosphate. An isopentenyl diphosphate-binding site is contributed by histidine 124. The Proton donor role is filled by glutamate 126. Threonine 169 serves as a coordination point for (2E)-4-hydroxy-3-methylbut-2-enyl diphosphate. Cysteine 199 contacts [4Fe-4S] cluster. Serine 227, serine 228, asparagine 229, and serine 271 together coordinate (2E)-4-hydroxy-3-methylbut-2-enyl diphosphate. Dimethylallyl diphosphate contacts are provided by serine 227, serine 228, asparagine 229, and serine 271. Isopentenyl diphosphate is bound by residues serine 227, serine 228, asparagine 229, and serine 271.

Belongs to the IspH family. [4Fe-4S] cluster is required as a cofactor.

It carries out the reaction isopentenyl diphosphate + 2 oxidized [2Fe-2S]-[ferredoxin] + H2O = (2E)-4-hydroxy-3-methylbut-2-enyl diphosphate + 2 reduced [2Fe-2S]-[ferredoxin] + 2 H(+). It catalyses the reaction dimethylallyl diphosphate + 2 oxidized [2Fe-2S]-[ferredoxin] + H2O = (2E)-4-hydroxy-3-methylbut-2-enyl diphosphate + 2 reduced [2Fe-2S]-[ferredoxin] + 2 H(+). It functions in the pathway isoprenoid biosynthesis; dimethylallyl diphosphate biosynthesis; dimethylallyl diphosphate from (2E)-4-hydroxy-3-methylbutenyl diphosphate: step 1/1. It participates in isoprenoid biosynthesis; isopentenyl diphosphate biosynthesis via DXP pathway; isopentenyl diphosphate from 1-deoxy-D-xylulose 5-phosphate: step 6/6. Functionally, catalyzes the conversion of 1-hydroxy-2-methyl-2-(E)-butenyl 4-diphosphate (HMBPP) into a mixture of isopentenyl diphosphate (IPP) and dimethylallyl diphosphate (DMAPP). Acts in the terminal step of the DOXP/MEP pathway for isoprenoid precursor biosynthesis. In Xanthomonas campestris pv. campestris (strain ATCC 33913 / DSM 3586 / NCPPB 528 / LMG 568 / P 25), this protein is 4-hydroxy-3-methylbut-2-enyl diphosphate reductase.